Reading from the N-terminus, the 638-residue chain is Adhesion G-protein coupled receptor F2 (638 aa).

The signal sequence occupies residues 1–25 (MISARWLYCLVLLLATESCRLFCQA). Over 26-386 (ASKSKENVMP…ESPVLTYITY (361 aa)) the chain is Extracellular. N-linked (GlcNAc...) asparagine glycans are attached at residues asparagine 155, asparagine 219, asparagine 248, asparagine 293, and asparagine 311. Residues 233 to 377 (PRNSLGKNFT…SILMSPNTVE (145 aa)) enclose the GAIN-B domain. Disulfide bonds link cysteine 329-cysteine 356 and cysteine 344-cysteine 358. The GPS stretch occupies residues 329–377 (CVGWHSLESRWDRRACKMIQENSRQAICRCQPNKFFTSFSILMSPNTVE). The helical transmembrane segment at 387 to 407 (IGLGISICSLIICLAIEALVW) threads the bilayer. Residues 408 to 422 (SQVTKTEISYLRHLC) are Cytoplasmic-facing. Residues 423 to 443 (IANIAVTLLMADVWFIVASFL) traverse the membrane as a helical segment. Over 444-465 (SGPIVHHNGCVTATFFVHFFYL) the chain is Extracellular. A helical membrane pass occupies residues 466–486 (SVFFWMLAKALLILYGILIVF). The Cytoplasmic segment spans residues 487–493 (HTLPKSC). Residues 494 to 514 (LVASLFTVGYGCPLVIAVITL) form a helical membrane-spanning segment. The Extracellular portion of the chain corresponds to 515–541 (AVTEPGKGYLRPEACWLNWDMTKALLA). A helical transmembrane segment spans residues 542-562 (FVVPALAIVVVNLITVTLVII). Topologically, residues 563–586 (KTQRAAVGSSMFQEVRAIVRICKN) are cytoplasmic. Residues 587–607 (IAILTPLLGLTWGFGIATVVA) form a helical membrane-spanning segment. Residues 608 to 610 (GHS) are Extracellular-facing. Residues 611–631 (LAFHIIFSLLNALQVSPDAMI) traverse the membrane as a helical segment. The Cytoplasmic segment spans residues 632–638 (ESEWRGC).

The protein belongs to the G-protein coupled receptor 2 family. Adhesion G-protein coupled receptor (ADGR) subfamily.

It localises to the membrane. Functionally, orphan receptor. This Rattus norvegicus (Rat) protein is Adhesion G-protein coupled receptor F2 (Adgrf2).